The primary structure comprises 227 residues: NAD(P)H-hydrate epimerase (227 aa).

In terms of domain architecture, YjeF N-terminal spans Ser-12–Glu-221. Asn-59–Asp-63 is a (6S)-NADPHX binding site. Asn-60 and Asp-131 together coordinate K(+). (6S)-NADPHX is bound by residues Gly-135–Glu-141 and Asp-164. Thr-167 lines the K(+) pocket.

The protein belongs to the NnrE/AIBP family. Requires K(+) as cofactor.

The catalysed reaction is (6R)-NADHX = (6S)-NADHX. It carries out the reaction (6R)-NADPHX = (6S)-NADPHX. Catalyzes the epimerization of the S- and R-forms of NAD(P)HX, a damaged form of NAD(P)H that is a result of enzymatic or heat-dependent hydration. This is a prerequisite for the S-specific NAD(P)H-hydrate dehydratase to allow the repair of both epimers of NAD(P)HX. The protein is NAD(P)H-hydrate epimerase of Pirellula staleyi (strain ATCC 27377 / DSM 6068 / ICPB 4128) (Pirella staleyi).